We begin with the raw amino-acid sequence, 33 residues long: Photosystem II reaction center protein Psb30 (33 aa).

Residues 5 to 25 traverse the membrane as a helical segment; it reads LIVQLGSLTLITLAGPLVVVL.

This sequence belongs to the Psb30/Ycf12 family. PSII is composed of 1 copy each of membrane proteins PsbA, PsbB, PsbC, PsbD, PsbE, PsbF, PsbH, PsbI, PsbJ, PsbK, PsbL, PsbM, PsbT, PsbY, PsbZ, Psb30/Ycf12, peripheral proteins of the oxygen-evolving complex and a large number of cofactors. It forms dimeric complexes.

The protein localises to the plastid. The protein resides in the chloroplast thylakoid membrane. Its function is as follows. A core subunit of photosystem II (PSII), probably helps stabilize the reaction center. This chain is Photosystem II reaction center protein Psb30, found in Euglena deses.